Reading from the N-terminus, the 232-residue chain is Orotidine 5'-phosphate decarboxylase (232 aa).

Residues Asp-13, Lys-35, 62-71 (DLKFHDIPNT), Thr-122, Arg-182, Gln-191, Gly-211, and Arg-212 each bind substrate. Lys-64 acts as the Proton donor in catalysis.

The protein belongs to the OMP decarboxylase family. Type 1 subfamily. In terms of assembly, homodimer.

The enzyme catalyses orotidine 5'-phosphate + H(+) = UMP + CO2. The protein operates within pyrimidine metabolism; UMP biosynthesis via de novo pathway; UMP from orotate: step 2/2. In terms of biological role, catalyzes the decarboxylation of orotidine 5'-monophosphate (OMP) to uridine 5'-monophosphate (UMP). In Pseudomonas aeruginosa (strain LESB58), this protein is Orotidine 5'-phosphate decarboxylase.